The sequence spans 424 residues: Histidine--tRNA ligase (424 aa).

This sequence belongs to the class-II aminoacyl-tRNA synthetase family. As to quaternary structure, homodimer.

It is found in the cytoplasm. The enzyme catalyses tRNA(His) + L-histidine + ATP = L-histidyl-tRNA(His) + AMP + diphosphate + H(+). The protein is Histidine--tRNA ligase of Staphylococcus epidermidis (strain ATCC 12228 / FDA PCI 1200).